The chain runs to 415 residues: MLRAAGNLSKSMMKSQRRFLNLQEFQSKEILEKHGCSVQNFVVASNRKEAEEKWMSFGDHEYVVKAQILAGGRGKGKFINGTKGIGGVFITKEKDAALEAIDEMIGKRLVTKQTTSEGVRVDKVMIAEGVDIKRETYLAVLMDRESNGPVVVASPDGGMDIEAVAEKTPERIFKTPIDIQMGMTEGQSLKIAKDLQFEGKLIGVAAQEIKRLYDLFIAVDATQVEINPLVETADGRVFCVDAKMNFDDSAAYRQKEIFAYETFEEHDPREVDAHQFNLNYIGMDGNIACLVNGAGLAMATMDLIKLHGGEPANFLDVGGAVTEDAVFNAVRIITSDPRVKCVLINIFGGIVNCATIANGVVSAVNKIGLNVPMVVRLEGTNVDAAKQIMKKSGLKILTANNLDEAAAKAVSSLPK.

The transit peptide at Met-1–Phe-19 directs the protein to the mitochondrion. The ATP-grasp domain occupies Lys-28–Phe-258. GTP-binding positions include Gln-39, Gly-72–Gly-74, and Val-130. Asn-227 and Asp-241 together coordinate Mg(2+). Substrate contacts are provided by residues Asn-292 and Gly-349–Val-351.

Belongs to the succinate/malate CoA ligase beta subunit family. GTP-specific subunit beta subfamily. Heterodimer of an alpha and a beta subunit. The beta subunit determines specificity for GTP. Mg(2+) is required as a cofactor.

It is found in the mitochondrion. The catalysed reaction is GTP + succinate + CoA = succinyl-CoA + GDP + phosphate. It functions in the pathway carbohydrate metabolism; tricarboxylic acid cycle; succinate from succinyl-CoA (ligase route): step 1/1. GTP-specific succinyl-CoA synthetase functions in the citric acid cycle (TCA), coupling the hydrolysis of succinyl-CoA to the synthesis of GTP and thus represents the only step of substrate-level phosphorylation in the TCA. The beta subunit provides nucleotide specificity of the enzyme and binds the substrate succinate, while the binding sites for coenzyme A and phosphate are found in the alpha subunit. The chain is Succinate--CoA ligase [GDP-forming] subunit beta, mitochondrial from Caenorhabditis elegans.